We begin with the raw amino-acid sequence, 290 residues long: Ribosomal RNA small subunit methyltransferase A (290 aa).

S-adenosyl-L-methionine-binding residues include N27, L29, G54, E75, D100, and N125.

The protein belongs to the class I-like SAM-binding methyltransferase superfamily. rRNA adenine N(6)-methyltransferase family. RsmA subfamily.

The protein resides in the cytoplasm. It catalyses the reaction adenosine(1518)/adenosine(1519) in 16S rRNA + 4 S-adenosyl-L-methionine = N(6)-dimethyladenosine(1518)/N(6)-dimethyladenosine(1519) in 16S rRNA + 4 S-adenosyl-L-homocysteine + 4 H(+). Specifically dimethylates two adjacent adenosines (A1518 and A1519) in the loop of a conserved hairpin near the 3'-end of 16S rRNA in the 30S particle. May play a critical role in biogenesis of 30S subunits. The polypeptide is Ribosomal RNA small subunit methyltransferase A (Streptococcus pneumoniae (strain 70585)).